The following is a 358-amino-acid chain: Heterogeneous nuclear ribonucleoprotein A2 homolog 2 (358 aa).

RRM domains follow at residues 9–92 (RKLF…ESAK) and 100–179 (KKLF…LSKQ). Disordered stretches follow at residues 182 to 217 (QDVQ…FRGG) and 333 to 358 (YGGG…RNRY). The segment covering 193–217 (GNFGFGDSRGGGNFGSGPGGNFRGG) has biased composition (gly residues). The nuclear targeting sequence stretch occupies residues 309–352 (QQSSSYGPMKSGGNFGGNRSMGGPYGGGNYGPGNGSGASGGGGY).

It is found in the nucleus. Functionally, forms complexes (ribonucleosomes) with at least 20 other different hnRNP and heterogeneous nuclear RNA in the nucleus. In Xenopus laevis (African clawed frog), this protein is Heterogeneous nuclear ribonucleoprotein A2 homolog 2.